Reading from the N-terminus, the 128-residue chain is MPGMRLVCRLAHGHFPRKGQRRRSLTVWKAETSRADCLGAPNIRTAPLGRSEKRTAICFSTGAQDSSQRAPFRLQNPGQLLQLGMHSLHLHPELPTTDPAFFCKLHFIKGNDPYCLTISHVKSVLTFS.

High expression in pituitary gland and weak in pancreas.

This is an uncharacterized protein from Homo sapiens (Human).